A 197-amino-acid chain; its full sequence is MSFSRLYRLLKPALLCGALAAPGLASTMCASRDDWRCARSMHEFSAKDIDGRMVNLDKYRGHVCIVTNVASQUGKTDVNYTQLVDLHARYAECGLRILAFPCNQFGRQEPGSNAEIKEFAAGYNVKFDLFSKICVNGDDAHPLWKWMKVQPKGRGMLGNAIKWNFTKFLIDKNGCVVKRYGPMEEPLVIEKDLPCYL.

Position 40 is a phosphoserine (S40). Residue U73 is part of the active site. Residue U73 is a non-standard amino acid, selenocysteine.

Belongs to the glutathione peroxidase family. As to quaternary structure, monomer. Has a tendency to form higher mass oligomers. Interacts with FUNDC1; this interaction promotes GPX4 recruitment into mitochondria through TOM/TIM complex where it is degraded by mitophagy.

It is found in the mitochondrion. It localises to the cytoplasm. It catalyses the reaction a hydroperoxy polyunsaturated fatty acid + 2 glutathione = a hydroxy polyunsaturated fatty acid + glutathione disulfide + H2O. It carries out the reaction 2 glutathione + H2O2 = glutathione disulfide + 2 H2O. The catalysed reaction is tert-butyl hydroperoxide + 2 glutathione = tert-butanol + glutathione disulfide + H2O. The enzyme catalyses cumene hydroperoxide + 2 glutathione = 2-phenylpropan-2-ol + glutathione disulfide + H2O. It catalyses the reaction (9S)-hydroperoxy-(10E,12Z)-octadecadienoate + 2 glutathione = (9S)-hydroxy-(10E,12Z)-octadecadienoate + glutathione disulfide + H2O. It carries out the reaction (13S)-hydroperoxy-(9Z,11E)-octadecadienoate + 2 glutathione = (13S)-hydroxy-(9Z,11E)-octadecadienoate + glutathione disulfide + H2O. The catalysed reaction is (5S)-hydroperoxy-(6E,8Z,11Z,14Z)-eicosatetraenoate + 2 glutathione = (5S)-hydroxy-(6E,8Z,11Z,14Z)-eicosatetraenoate + glutathione disulfide + H2O. The enzyme catalyses (12R)-hydroperoxy-(5Z,8Z,10E,14Z)-eicosatetraenoate + 2 glutathione = (12R)-hydroxy-(5Z,8Z,10E,14Z)-eicosatetraenoate + glutathione disulfide + H2O. It catalyses the reaction (12S)-hydroperoxy-(5Z,8Z,10E,14Z)-eicosatetraenoate + 2 glutathione = (12S)-hydroxy-(5Z,8Z,10E,14Z)-eicosatetraenoate + glutathione disulfide + H2O. It carries out the reaction (15S)-hydroperoxy-(5Z,8Z,11Z,13E)-eicosatetraenoate + 2 glutathione = (15S)-hydroxy-(5Z,8Z,11Z,13E)-eicosatetraenoate + glutathione disulfide + H2O. The catalysed reaction is (5S)-hydroperoxy-(6E,8Z,11Z,14Z,17Z)-eicosapentaenoate + 2 glutathione = (5S)-hydroxy-(6E,8Z,11Z,14Z,17Z)-eicosapentaenoate + glutathione disulfide + H2O. The enzyme catalyses (12S)-hydroperoxy-(5Z,8Z,10E,14Z,17Z)-eicosapentaenoate + 2 glutathione = (12S)-hydroxy-(5Z,8Z,10E,14Z,17Z)-eicosapentaenoate + glutathione disulfide + H2O. It catalyses the reaction (15S)-hydroperoxy-(5Z,8Z,11Z,13E,17Z)-eicosapentaenoate + 2 glutathione = (15S)-hydroxy-(5Z,8Z,11Z,13E,17Z)-eicosapentaenoate + glutathione disulfide + H2O. It carries out the reaction (15S)-hydroperoxy-(11Z,13E)-eicosadienoate + 2 glutathione = (15S)-hydroxy-(11Z,13E)-eicosadienoate + glutathione disulfide + H2O. The catalysed reaction is (17S)-hydroperoxy-(4Z,7Z,10Z,13Z,15E,19Z)-docosahexaenoate + 2 glutathione = (17S)-hydroxy-(4Z,7Z,10Z,13Z,15E,19Z)-docosahexaenoate + glutathione disulfide + H2O. The enzyme catalyses a hydroperoxy-1,2-diacyl-glycero-3-phosphocholine + 2 glutathione = a hydroxy-1,2-diacyl-glycero-3-phosphocholine + glutathione disulfide + H2O. In terms of biological role, essential antioxidant peroxidase that directly reduces phospholipid hydroperoxide even if they are incorporated in membranes and lipoproteins. Can also reduce fatty acid hydroperoxide, cholesterol hydroperoxide and thymine hydroperoxide. Plays a key role in protecting cells from oxidative damage by preventing membrane lipid peroxidation. Required to prevent cells from ferroptosis, a non-apoptotic cell death resulting from an iron-dependent accumulation of lipid reactive oxygen species. The presence of selenocysteine (Sec) versus Cys at the active site is essential for life: it provides resistance to overoxidation and prevents cells against ferroptosis. The presence of Sec at the active site is also essential for the survival of a specific type of parvalbumin-positive interneurons, thereby preventing against fatal epileptic seizures. May be required to protect cells from the toxicity of ingested lipid hydroperoxides. Required for normal sperm development and male fertility. Essential for maturation and survival of photoreceptor cells. Plays a role in a primary T-cell response to viral and parasitic infection by protecting T-cells from ferroptosis and by supporting T-cell expansion. Plays a role of glutathione peroxidase in platelets in the arachidonic acid metabolism. Reduces hydroperoxy ester lipids formed by a 15-lipoxygenase that may play a role as down-regulator of the cellular 15-lipoxygenase pathway. Can also reduce small soluble hydroperoxides such as H2O2, cumene hydroperoxide and tert-butyl hydroperoxide. This Bos taurus (Bovine) protein is Phospholipid hydroperoxide glutathione peroxidase.